We begin with the raw amino-acid sequence, 830 residues long: Vacuolar protein sorting-associated protein 11 homolog (830 aa).

The RING-type; atypical zinc-finger motif lies at 733–775 (CDICREMLSMQSIYFLCQHSFHEECLNYKSTKRQEKFLCIICK).

It belongs to the VPS11 family. Part of the homotypic fusion and vacuole protein sorting (HOPS) complex, composed of Vps16A, car/Vps33A, dor/Vps18, Vps39, Vps11 and lt/Vps41. Unlike in other species, not part of the class C core vacuole/endosome tethering (CORVET) complex.

The protein resides in the late endosome membrane. It localises to the lysosome membrane. Functionally, part of the homotypic fusion and vacuole protein sorting (HOPS) tethering complex involved in endo-lysosomal vesicle trafficking and lysosome biogenesis, but unlike in many other species does not form part of the class C core vacuole/endosome tethering (CORVET) complex. The HOPS complex facilitates docking and fusion of lysosomes with late endosomes and several other types of vesicles. The HOPS complex is also involved in autophagy, pigment granule biogenesis and crinophagy (the elimination of unused secretory granules through fusion with lysosomes). The HOPS complex probably instigates autophagosome-lysosome fusion by binding autophagosome-associated Syx17/syntaxin 17 and promoting assembly of the trans-SNARE complex. Independent of Syx17/syntaxin 17, HOPS is involved in biosynthetic transport to lysosomes and lysosome-related organelles such as eye-pigment granules. Required for autophagocytosis-dependent remodeling of myofibrils and transverse-tubules (T-tubules) during metamorphosis. The polypeptide is Vacuolar protein sorting-associated protein 11 homolog (Drosophila melanogaster (Fruit fly)).